We begin with the raw amino-acid sequence, 174 residues long: MANRKKQGKSKEKDNGWEERVVQVKRVTKVVKGGKKLSFRVILVVGNEQGQVGVGVGKASDVIGAVKKGVTDAKKHLVTVPLTKSNSIPHPINGISGAAQVILRPSAPGSGVIAGGSVRTVLELSGVQNILAKQLGSNNTLNNARAVLNGLTQLRTFSEAAKDRGVPIENLYSK.

Positions Trp17–Val80 constitute an S5 DRBM domain.

Belongs to the universal ribosomal protein uS5 family. As to quaternary structure, part of the 30S ribosomal subunit. Contacts protein S4.

Its subcellular location is the plastid. It is found in the chloroplast. Its function is as follows. With S4 and S12 plays an important role in translational accuracy. This chain is Small ribosomal subunit protein uS5c (rps5), found in Porphyra purpurea (Red seaweed).